A 177-amino-acid polypeptide reads, in one-letter code: Alkyl hydroperoxide reductase AhpD (177 aa).

Cysteine 130 acts as the Proton donor in catalysis. An intrachain disulfide couples cysteine 130 to cysteine 133. The active-site Cysteine sulfenic acid (-SOH) intermediate is cysteine 133.

Belongs to the AhpD family. In terms of assembly, homotrimer.

The catalysed reaction is N(6)-[(R)-dihydrolipoyl]-L-lysyl-[lipoyl-carrier protein] + a hydroperoxide = N(6)-[(R)-lipoyl]-L-lysyl-[lipoyl-carrier protein] + an alcohol + H2O. In terms of biological role, antioxidant protein with alkyl hydroperoxidase activity. Required for the reduction of the AhpC active site cysteine residues and for the regeneration of the AhpC enzyme activity. This Mycolicibacterium smegmatis (strain ATCC 700084 / mc(2)155) (Mycobacterium smegmatis) protein is Alkyl hydroperoxide reductase AhpD.